Reading from the N-terminus, the 726-residue chain is Probable pre-mRNA-splicing factor ATP-dependent RNA helicase DEAH2 (726 aa).

A Helicase ATP-binding domain is found at 71–240 (LKTLNNNQTL…FSGAPLMKVP (170 aa)). 84–91 (GETGSGKT) contributes to the ATP binding site. The DEAH box motif lies at 187–190 (DEAH). The Helicase C-terminal domain occupies 265–445 (TVVQIHMCEP…NTVLTLKKLG (181 aa)).

The protein belongs to the DEAD box helicase family. DEAH subfamily. PRP43 sub-subfamily.

It catalyses the reaction ATP + H2O = ADP + phosphate + H(+). In terms of biological role, may be involved in pre-mRNA splicing. In Arabidopsis thaliana (Mouse-ear cress), this protein is Probable pre-mRNA-splicing factor ATP-dependent RNA helicase DEAH2.